A 138-amino-acid polypeptide reads, in one-letter code: Basic phospholipase A2 chain HDP-1P (138 aa).

The first 16 residues, 1-16 (MRILWIVAVCLIGVEG), serve as a signal peptide directing secretion. Cystine bridges form between C42/C131, C44/C60, C59/C111, C65/C138, C66/C104, C73/C97, and C91/C102. Ca(2+) is bound by residues Y43, G45, and G47. Residue H63 is part of the active site. D64 serves as a coordination point for Ca(2+). D105 is an active-site residue.

In terms of assembly, heterodimer; non-covalently linked. The toxic basic protein has phospholipase A2 activity (chain HDP-1P) and the non-toxic acidic protein functions as its inhibitor (chain HPD-1I (AC A4VBF0)). Requires Ca(2+) as cofactor. Expressed by the venom gland.

Its subcellular location is the secreted. It catalyses the reaction a 1,2-diacyl-sn-glycero-3-phosphocholine + H2O = a 1-acyl-sn-glycero-3-phosphocholine + a fatty acid + H(+). Its activity is regulated as follows. Enzymatic activity and neurotoxicity are inhibited by Triton X-100, which has been determined to be located in the center of the hydrophobic channel of the enzyme. Heterodimer: shows the same activities as the monomer, but with a lower potency. Its function is as follows. Monomer: snake venom phospholipase A2 (PLA2) that shows presynaptic neurotoxicity, anticoagulant activity and that weakly inhibits ADP-induced platelet aggregation. Inhibits exocytosis in pancreatic beta cells, confirming it can act presynaptically in inhibiting the exocytosis of neurotransmitters in neurons. PLA2 catalyzes the calcium-dependent hydrolysis of the 2-acyl groups in 3-sn-phosphoglycerides. This is Basic phospholipase A2 chain HDP-1P from Vipera nikolskii (Nikolsky's adder).